The chain runs to 192 residues: Ion-translocating oxidoreductase complex subunit A (192 aa).

The next 6 membrane-spanning stretches (helical) occupy residues 5-25, 39-59, 65-85, 102-122, 134-154, and 171-191; these read LLLL…FLGL, IGMS…SYLV, LPFD…AVVV, ALGI…VALL, AIYG…FSAM, and AIAM…TGLV.

This sequence belongs to the NqrDE/RnfAE family. In terms of assembly, the complex is composed of six subunits: RnfA, RnfB, RnfC, RnfD, RnfE and RnfG.

It localises to the cell inner membrane. Functionally, part of a membrane-bound complex that couples electron transfer with translocation of ions across the membrane. In Shewanella sp. (strain MR-4), this protein is Ion-translocating oxidoreductase complex subunit A.